A 977-amino-acid polypeptide reads, in one-letter code: DNA-directed RNA polymerase 3A, chloroplastic (977 aa).

Residues 1–72 constitute a chloroplast transit peptide; the sequence is MASTASYSPS…NNIQSQTTVC (72 aa). Residues aspartate 678, lysine 753, and aspartate 910 contribute to the active site.

The protein belongs to the phage and mitochondrial RNA polymerase family.

It localises to the plastid. It is found in the chloroplast. The enzyme catalyses RNA(n) + a ribonucleoside 5'-triphosphate = RNA(n+1) + diphosphate. In terms of biological role, DNA-dependent RNA polymerase catalyzes the transcription of DNA into RNA using the four ribonucleoside triphosphates as substrates. This chain is DNA-directed RNA polymerase 3A, chloroplastic (RPOT3-SYL), found in Nicotiana tabacum (Common tobacco).